The sequence spans 113 residues: MPSRAATSPLNVQMMVVLCIVCLALQAVAANATRSKNNVPRRFPRARYRVGYMFGKRSSSETYSTNLINLLSRQLVSQEELRAILEKQPILLDEVVKILDRNDDGYITVADLL.

Positions 1–32 are cleaved as a signal peptide; that stretch reads MPSRAATSPLNVQMMVVLCIVCLALQAVAANA. Phe54 is subject to Phenylalanine amide. A propeptide spanning residues 58–113 is cleaved from the precursor; that stretch reads SSSETYSTNLINLLSRQLVSQEELRAILEKQPILLDEVVKILDRNDDGYITVADLL. Residues 87–113 form the EF-hand domain; that stretch reads KQPILLDEVVKILDRNDDGYITVADLL. 5 residues coordinate Ca(2+): Asp100, Asn102, Asp104, Tyr106, and Asp111.

As to expression, seems to be specific to the mechanosensory neurons of the central nervous system.

It localises to the secreted. Functionally, may function as an inhibitory cotransmitter acting in conjunction with the fast excitatory transmitter released by sensory neurons. The peptide selectively inhibits certain postsynaptic cells probably by means of sensorin A release. This Aplysia californica (California sea hare) protein is Sensorin-A (PSC1).